A 439-amino-acid chain; its full sequence is uncharacterized protein (439 aa).

Disordered stretches follow at residues 1–36 (MRPG…SKQA), 126–157 (SRTG…GVPI), and 411–439 (FRSD…AVPR).

This is an uncharacterized protein from Streptomyces fradiae (Streptomyces roseoflavus).